We begin with the raw amino-acid sequence, 76 residues long: MARQSFKRRKFCRFTAEKIQEVDYKQVDLLKDFISENGKIIPARITGTKAFYQRQLAVAVKRARFLALLPYTDQHK.

This sequence belongs to the bacterial ribosomal protein bS18 family. As to quaternary structure, part of the 30S ribosomal subunit. Forms a tight heterodimer with protein bS6.

Functionally, binds as a heterodimer with protein bS6 to the central domain of the 16S rRNA, where it helps stabilize the platform of the 30S subunit. This Neisseria gonorrhoeae (strain ATCC 700825 / FA 1090) protein is Small ribosomal subunit protein bS18.